Reading from the N-terminus, the 1434-residue chain is Probable ATP-dependent RNA helicase spindle-E (1434 aa).

One can recognise a Helicase ATP-binding domain in the interval 125–292; it reads LAAINAHPVV…FTTTNSIPPV (168 aa). 138-145 lines the ATP pocket; the sequence is GETGCGKT. The DEAH box signature appears at 238 to 241; sequence DEVH. The Helicase C-terminal domain maps to 354–526; sequence QSRQSYDEAL…NSVLKAKVLN (173 aa). In terms of domain architecture, Tudor spans 938 to 1001; the sequence is ASAIAKGMMV…RLMPRELTEQ (64 aa).

The protein belongs to the DEAD box helicase family. DEAH subfamily.

It is found in the cytoplasm. The protein localises to the perinuclear region. The protein resides in the cytoplasmic ribonucleoprotein granule. It carries out the reaction ATP + H2O = ADP + phosphate + H(+). In terms of biological role, probable ATP-binding RNA helicase which plays a central role during spermatogenesis and oogenesis by repressing transposable elements and preventing their mobilization, which is essential for the germline integrity. Acts via the piRNA metabolic process, which mediates the repression of transposable elements during meiosis by forming complexes composed of piRNAs and Piwi and govern the methylation and subsequent repression of transposons. Involved in the repression of LTR retrotransposon copia. Also involved in telomere regulation by repressing specialized telomeric retroelements HeT-A, TAHRE, and TART; Drosophila telomeres being maintained by transposition of specialized telomeric retroelements. Involved in telomeric trans-silencing, a repression mechanism by which a transposon or a transgene inserted in subtelomeric heterochromatin has the capacity to repress in trans in the female germline, a homologous transposon, or transgene located in euchromatin. Involved in the repression of testis-expressed Stellate genes by the homologous Su(Ste) repeats. Required for anteroposterior and dorsoventral axis formation during oogenesis. Key component of the perinuclear meiotic nuage, an electron dense structure involved in the post-transcriptional regulation of transposons and mRNAs; required for recruitment of other nuage comonents including vas, krimp, aub and mael. May have a role in production of piwi-interacting RNA (piRNA). This chain is Probable ATP-dependent RNA helicase spindle-E, found in Drosophila melanogaster (Fruit fly).